The primary structure comprises 61 residues: Large ribosomal subunit protein bL32 (61 aa).

Positions Met1–Arg16 are enriched in basic residues. Residues Met1–Gly61 form a disordered region. Residues Val28 to Leu44 are compositionally biased toward basic and acidic residues.

The protein belongs to the bacterial ribosomal protein bL32 family.

The polypeptide is Large ribosomal subunit protein bL32 (Bartonella bacilliformis (strain ATCC 35685 / KC583 / Herrer 020/F12,63)).